We begin with the raw amino-acid sequence, 91 residues long: Small ribosomal subunit protein bS16 (91 aa).

This sequence belongs to the bacterial ribosomal protein bS16 family.

This Staphylococcus haemolyticus (strain JCSC1435) protein is Small ribosomal subunit protein bS16.